Here is a 117-residue protein sequence, read N- to C-terminus: Large ribosomal subunit protein uL18 (117 aa).

This sequence belongs to the universal ribosomal protein uL18 family. Part of the 50S ribosomal subunit; part of the 5S rRNA/L5/L18/L25 subcomplex. Contacts the 5S and 23S rRNAs.

Functionally, this is one of the proteins that bind and probably mediate the attachment of the 5S RNA into the large ribosomal subunit, where it forms part of the central protuberance. The protein is Large ribosomal subunit protein uL18 of Mycoplasma mobile (strain ATCC 43663 / 163K / NCTC 11711) (Mesomycoplasma mobile).